The primary structure comprises 213 residues: ATP-dependent Clp protease proteolytic subunit 1 (213 aa).

The active-site Nucleophile is the serine 114. Histidine 139 is a catalytic residue.

Belongs to the peptidase S14 family. As to quaternary structure, fourteen ClpP subunits assemble into 2 heptameric rings which stack back to back to give a disk-like structure with a central cavity, resembling the structure of eukaryotic proteasomes.

The protein resides in the cytoplasm. The enzyme catalyses Hydrolysis of proteins to small peptides in the presence of ATP and magnesium. alpha-casein is the usual test substrate. In the absence of ATP, only oligopeptides shorter than five residues are hydrolyzed (such as succinyl-Leu-Tyr-|-NHMec, and Leu-Tyr-Leu-|-Tyr-Trp, in which cleavage of the -Tyr-|-Leu- and -Tyr-|-Trp bonds also occurs).. Cleaves peptides in various proteins in a process that requires ATP hydrolysis. Has a chymotrypsin-like activity. Plays a major role in the degradation of misfolded proteins. In Pseudomonas aeruginosa (strain ATCC 15692 / DSM 22644 / CIP 104116 / JCM 14847 / LMG 12228 / 1C / PRS 101 / PAO1), this protein is ATP-dependent Clp protease proteolytic subunit 1.